The primary structure comprises 255 residues: uncharacterized protein (255 aa).

2 helical membrane passes run 2-22 (LLPA…YGVL) and 168-188 (VASV…FNLF).

The protein resides in the cell membrane. This is an uncharacterized protein from Mycobacterium tuberculosis (strain ATCC 25618 / H37Rv).